Reading from the N-terminus, the 635-residue chain is DNA topoisomerase 4 subunit B (635 aa).

Residues tyrosine 5, asparagine 45, aspartate 72, 113-119 (GLHGVGA), and lysine 340 contribute to the ATP site. One can recognise a Toprim domain in the interval 422 to 537 (RELFVVEGDS…KGHIYLALPP (116 aa)). Mg(2+) contacts are provided by glutamate 428, aspartate 502, and aspartate 504.

Belongs to the type II topoisomerase family. ParE type 2 subfamily. Heterotetramer composed of ParC and ParE. It depends on Mg(2+) as a cofactor. The cofactor is Mn(2+). Requires Ca(2+) as cofactor.

It catalyses the reaction ATP-dependent breakage, passage and rejoining of double-stranded DNA.. Functionally, topoisomerase IV is essential for chromosome segregation. It relaxes supercoiled DNA. Performs the decatenation events required during the replication of a circular DNA molecule. In Mycoplasma pneumoniae (strain ATCC 29342 / M129 / Subtype 1) (Mycoplasmoides pneumoniae), this protein is DNA topoisomerase 4 subunit B.